The following is a 564-amino-acid chain: MVLYIILAIIVIILIAVGVLFYLRSNKRQIIEKAIERKNEIETLPFDQNLAQLSKLNLKGETKTKYDAMKKDNVESTNKYLAPVEEKIHNAEALLDKFSFNASQSEIDDANELMDSYEQSYQQQLEDVNEIIALYKDNDELYDKCKVDYREMKRDVLANRHQFGEAASLLETEIEKFEPRLEQYEVLKADGNYVQAHNHIAALNEQMKQLRSYMEEIPELIRETQKELPGQFQDLKYGCRDLKVEGYDLDHVKVDSTLQSLKTELSFVEPLISRLELEEANDKLANINDKLDDMYDLIEHEVKAKNDVEETKDIITDNLFKAKDMNYTLQTEIEYVRENYYINESDAQSVRQFENEIQSLISVYDDILKEMSKSAVRYSEVQDNLQYLEDHVTVINDKQEKLQNHLIQLREDEAEAEDNLLRVQSKKEEVYRRLLASNLTSVPERFIIMKNEIDHEVRDVNEQFSERPIHVKQLKDKVSKIVIQMNTFEDEANDVLVNAVYAEKLIQYGNRYRKDYSNVDKSLNEAERLFKNNRYKRAIEIAEQVLESVEPGVTKHIEEEVIKQ.

Residues 1–4 (MVLY) are Extracellular-facing. The chain crosses the membrane as a helical span at residues 5-23 (IILAIIVIILIAVGVLFYL). Residues 24-564 (RSNKRQIIEK…KHIEEEVIKQ (541 aa)) lie on the Cytoplasmic side of the membrane. Coiled coils occupy residues 99 to 138 (SFNASQSEIDDANELMDSYEQSYQQQLEDVNEIIALYKDN), 190 to 223 (DGNYVQAHNHIAALNEQMKQLRSYMEEIPELIRE), 271 to 300 (LISRLELEEANDKLANINDKLDDMYDLIEH), 350 to 435 (VRQF…RRLL), and 471 to 550 (VKQL…ESVE).

This sequence belongs to the EzrA family.

It is found in the cell membrane. Its function is as follows. Negative regulator of FtsZ ring formation; modulates the frequency and position of FtsZ ring formation. Inhibits FtsZ ring formation at polar sites. Interacts either with FtsZ or with one of its binding partners to promote depolymerization. In Staphylococcus aureus (strain Mu3 / ATCC 700698), this protein is Septation ring formation regulator EzrA.